A 670-amino-acid chain; its full sequence is uncharacterized protein (670 aa).

The next 10 helical transmembrane spans lie at 23 to 42 (YALRNTIAMCLALTVAYYLN), 47 to 69 (YWAMTSAAVVSFPTVGGVISKSL), 76 to 98 (LLGAIAALLLAGHTLNEPWFFLL), 118 to 140 (VAYAFQLAGYTAAIIAFPMVNIT), 153 to 170 (VCEVIVGILCGGMMMMIL), 381 to 403 (QWDAGANALTLAAISCVLYSAVA), 410 to 432 (SLLMRTLVLLSLFSFVVKFGLMV), 437 to 454 (LWQFLLFLFPLLATMQLL), 461 to 483 (FAALWGQLIVFMGSFIAVTNPPV), and 493 to 510 (NLAKIVGVALAWLAFAIL).

Belongs to the aromatic acid exporter ArAE (TC 2.A.85) family.

It is found in the cell membrane. This is an uncharacterized protein from Escherichia coli (strain K12).